Consider the following 595-residue polypeptide: UvrABC system protein C (595 aa).

A GIY-YIG domain is found at 14–91; sequence SNPGCYLHKD…IQENMPKFNI (78 aa). A UVR domain is found at 196-231; that stretch reads DKIVNQLKAKMKDMSDQMAFERAAEYRDLIEAVSTL.

Belongs to the UvrC family. Interacts with UvrB in an incision complex.

The protein localises to the cytoplasm. In terms of biological role, the UvrABC repair system catalyzes the recognition and processing of DNA lesions. UvrC both incises the 5' and 3' sides of the lesion. The N-terminal half is responsible for the 3' incision and the C-terminal half is responsible for the 5' incision. The chain is UvrABC system protein C from Streptococcus thermophilus (strain ATCC BAA-491 / LMD-9).